We begin with the raw amino-acid sequence, 341 residues long: Transmembrane protein 120A-A (341 aa).

Residues 1–131 are Cytoplasmic-facing; it reads MLFNPTGLTE…KQSKFAYKDE (131 aa). CoA is bound at residue Lys129. The helical transmembrane segment at 132–151 threads the bilayer; the sequence is YEKFKLYLTVLLLFFSFTCR. The Extracellular segment spans residues 152-157; the sequence is FLVSYR. A helical membrane pass occupies residues 158–176; that stretch reads VVDALFNFLLVWYYCTLTI. Topologically, residues 177 to 189 are cytoplasmic; the sequence is RESILINNGSKIK. Residues Ser186 and Lys187 each coordinate CoA. A helical membrane pass occupies residues 190–208; the sequence is GWWVFQHYVSTFLSGVMLT. The Extracellular portion of the chain corresponds to 209-217; sequence WPDGELYQM. The chain crosses the membrane as a helical span at residues 218–239; sequence FRNQFLSYSMYINFVQFFQYYY. CoA-binding residues include Gln236, Tyr239, Gln240, and His282. Residues 240-269 lie on the Cytoplasmic side of the membrane; that stretch reads QSGCLYRLRALGERHNMDLTVEGFQSWMWR. Residues 270-293 traverse the membrane as a helical segment; sequence GLTFLLPFLFLGHFFQLYNGITLF. The Extracellular segment spans residues 294-303; sequence QMTQLPEWKE. Residues 304–329 form a helical membrane-spanning segment; it reads WQVLMCGSTFLVLFMGNFFTTLGVVY. The Cytoplasmic segment spans residues 330 to 341; sequence HKYMDQDKAKGL. Residue Lys331 coordinates CoA.

The protein belongs to the TMEM120 family. In terms of assembly, homodimer.

Its subcellular location is the cell membrane. It is found in the nucleus inner membrane. The protein localises to the endoplasmic reticulum. Multifunctional protein involved in mechanosensation, and plays an essential role in lipid metabolism. May function as a potential ion channel involved in sensing mechanical stimuli. TMEM120A is structurally similar to a lipid-modifying enzyme, ELOVL7, and contains a bound coenzyme A molecule, which suggests it might function as an enzyme in lipid metabolism. This Danio rerio (Zebrafish) protein is Transmembrane protein 120A-A (tmem120aa).